A 294-amino-acid chain; its full sequence is Small ribosomal subunit protein uS2 (294 aa).

Basic and acidic residues predominate over residues Arg232–Gln245. The disordered stretch occupies residues Arg232 to Asn294. Positions Glu246–Glu265 are enriched in low complexity.

Belongs to the universal ribosomal protein uS2 family.

The polypeptide is Small ribosomal subunit protein uS2 (Desulfatibacillum aliphaticivorans).